The sequence spans 153 residues: Large ribosomal subunit protein uL30 (153 aa).

The protein belongs to the universal ribosomal protein uL30 family. Part of the 50S ribosomal subunit.

In Methanosarcina mazei (strain ATCC BAA-159 / DSM 3647 / Goe1 / Go1 / JCM 11833 / OCM 88) (Methanosarcina frisia), this protein is Large ribosomal subunit protein uL30.